Reading from the N-terminus, the 98-residue chain is Small ribosomal subunit protein bS20 (98 aa).

Residues 1–12 are compositionally biased toward basic residues; it reads MAPRKPSKKVGP. Residues 1–31 are disordered; that stretch reads MAPRKPSKKVGPQKRPSAEKRVITSKKKQLR.

The protein belongs to the bacterial ribosomal protein bS20 family.

Binds directly to 16S ribosomal RNA. This chain is Small ribosomal subunit protein bS20, found in Chlamydia trachomatis serovar L2 (strain ATCC VR-902B / DSM 19102 / 434/Bu).